The sequence spans 226 residues: Ribose-5-phosphate isomerase A (226 aa).

Substrate contacts are provided by residues 26 to 29 (TGST), 82 to 85 (DGAD), and 95 to 98 (KGGG). Catalysis depends on Glu104, which acts as the Proton acceptor. Residue Lys122 participates in substrate binding.

Belongs to the ribose 5-phosphate isomerase family. As to quaternary structure, homodimer.

The catalysed reaction is aldehydo-D-ribose 5-phosphate = D-ribulose 5-phosphate. It functions in the pathway carbohydrate degradation; pentose phosphate pathway; D-ribose 5-phosphate from D-ribulose 5-phosphate (non-oxidative stage): step 1/1. Catalyzes the reversible conversion of ribose-5-phosphate to ribulose 5-phosphate. The chain is Ribose-5-phosphate isomerase A from Streptococcus thermophilus (strain ATCC BAA-250 / LMG 18311).